We begin with the raw amino-acid sequence, 62 residues long: Synergistic-type venom protein C8S2, chain 1 (62 aa).

Disulfide bonds link cysteine 3–cysteine 24, cysteine 17–cysteine 42, and cysteine 46–cysteine 57.

It belongs to the three-finger toxin family. Short-chain subfamily. Aminergic toxin sub-subfamily. Heterodimer of C8S2 chain 1 and chain 2 (AC P01411); disulfide-linked. In terms of tissue distribution, expressed by the venom gland.

Its subcellular location is the secreted. In terms of biological role, this protein shows a synergetic toxic effect in that it enhances the toxicity of other toxins. This is Synergistic-type venom protein C8S2, chain 1 from Dendroaspis angusticeps (Eastern green mamba).